The following is a 1039-amino-acid chain: Integrin alpha-4 (1039 aa).

Residues 1-40 (MFSTKSAWLRNGGADQGPRGIALREAVMLLLYFGVPTGPS) form the signal peptide. Residues 41–983 (YNLDPENALL…LHHQRPKRHF (943 aa)) lie on the Extracellular side of the membrane. FG-GAP repeat units lie at residues 42–107 (NLDP…PNQT), 117–184 (SGEP…TELS), 193–244 (DYTR…QYKA), 246–298 (VDRQ…ENEL), 299–358 (NIVY…GAVM), 362–419 (ERVL…GISS), and 423–485 (QRIE…HPES). Asn86, Asn105, and Asn145 each carry an N-linked (GlcNAc...) asparagine glycan. The cysteines at positions 98 and 108 are disulfide-linked. 2 cysteine pairs are disulfide-bonded: Cys151-Cys172 and Cys190-Cys205. N-linked (GlcNAc...) asparagine glycosylation is present at Asn236. Residues Asp321, Asn323, Asp325, Asp329, Asp384, Asp386, Asp388, Asp392, Asp446, Asp448, Asn450, Tyr452, and Asp454 each coordinate Ca(2+). The N-linked (GlcNAc...) asparagine glycan is linked to Asn487. 2 cysteine pairs are disulfide-bonded: Cys493–Cys502 and Cys508–Cys564. Asn525 and Asn545 each carry an N-linked (GlcNAc...) asparagine glycan. Residues 613-623 (KKEKDVIRKMI) carry the SG1 motif. A disulfide bridge connects residues Cys629 and Cys634. N-linked (GlcNAc...) asparagine glycans are attached at residues Asn633, Asn652, and Asn667. Cys705 and Cys718 form a disulfide bridge. N-linked (GlcNAc...) asparagine glycans are attached at residues Asn813 and Asn828. Disulfide bonds link Cys859–Cys897 and Cys904–Cys909. Residues 984–1007 (TIIIITISLLLGLIVLLLISCVMW) traverse the membrane as a helical segment. Topologically, residues 1008 to 1039 (KAGFFKRQYKSILQEENRRDSWSYVNSKSNDD) are cytoplasmic. The GFFKR motif signature appears at 1010–1014 (GFFKR). At Ser1028 the chain carries Phosphoserine.

It belongs to the integrin alpha chain family. In terms of assembly, heterodimer of an alpha and a beta subunit. The alpha subunit can sometimes be cleaved into two non-covalently associated fragments. Alpha-4 associates with either beta-1 or beta-7. Alpha-4 interacts with PXN, LPXN, and TGFB1I1/HIC5. Interacts with CSPG4 through CSPG4 chondroitin sulfate glycosaminoglycan. Interacts with JAML; integrin alpha-4/beta-1 may regulate leukocyte to endothelial cells adhesion by controlling JAML homodimerization. ITGA4:ITGB1 is found in a ternary complex with CX3CR1 and CX3CL1. Interacts with MDK. ITGA4:ITGB1 interacts with MDK; this interaction mediates MDK-induced osteoblast cells migration through PXN phosphorylation. Integrin ITGA4:ITGB1 interacts with SVEP1 (via Sushi domain 21); thereby inhibits Ca(2+) intracellular signaling and as a result represses vasocontraction. ITGA4:ITGB1 interacts with SELP. ITGA4:ITGB1 interacts with BCAM. Post-translationally, phosphorylation on Ser-1028 inhibits PXN binding. As to expression, expressed in the media layer of the arterial wall (at protein level). Weakly expression in the thymus, spleen and mesenteric lymph nodes.

Its subcellular location is the membrane. In terms of biological role, integrins alpha-4/beta-1 (VLA-4 or LPAM-2) and alpha-4/beta-7 (LPAM-1) are receptors for fibronectin. They recognize one or more domains within the alternatively spliced CS-1 and CS-5 regions of fibronectin. They are also receptors for VCAM1. Integrin alpha-4/beta-1 recognizes the sequence Q-I-D-S in VCAM1. Integrin alpha-4/beta-7 is also a receptor for MADCAM1. It recognizes the sequence L-D-T in MADCAM1. On activated endothelial cells integrin VLA-4 triggers homotypic aggregation for most VLA-4-positive leukocyte cell lines. It may also participate in cytolytic T-cell interactions with target cells. ITGA4:ITGB1 binds to fractalkine (CX3CL1) and may act as its coreceptor in CX3CR1-dependent fractalkine signaling. ITGA4:ITGB1 binds to PLA2G2A via a site (site 2) which is distinct from the classical ligand-binding site (site 1) and this induces integrin conformational changes and enhanced ligand binding to site 1. Integrin ITGA4:ITGB1 represses PRKCA-mediated L-type voltage-gated channel Ca(2+) influx and ROCK-mediated calcium sensitivity in vascular smooth muscle cells via its interaction with SVEP1, thereby inhibiting vasocontraction. This is Integrin alpha-4 (Itga4) from Mus musculus (Mouse).